Consider the following 217-residue polypeptide: 3,4-dihydroxy-2-butanone 4-phosphate synthase (217 aa).

Residues 37 to 38 (RE), Asp42, 150 to 154 (RGGHT), and Glu174 contribute to the D-ribulose 5-phosphate site. Glu38 contributes to the Mg(2+) binding site. His153 serves as a coordination point for Mg(2+).

This sequence belongs to the DHBP synthase family. In terms of assembly, homodimer. It depends on Mg(2+) as a cofactor. The cofactor is Mn(2+).

The catalysed reaction is D-ribulose 5-phosphate = (2S)-2-hydroxy-3-oxobutyl phosphate + formate + H(+). Its pathway is cofactor biosynthesis; riboflavin biosynthesis; 2-hydroxy-3-oxobutyl phosphate from D-ribulose 5-phosphate: step 1/1. In terms of biological role, catalyzes the conversion of D-ribulose 5-phosphate to formate and 3,4-dihydroxy-2-butanone 4-phosphate. This Shigella boydii serotype 18 (strain CDC 3083-94 / BS512) protein is 3,4-dihydroxy-2-butanone 4-phosphate synthase.